Reading from the N-terminus, the 239-residue chain is Uridylate kinase (239 aa).

13–16 serves as a coordination point for ATP; that stretch reads KLSG. Residue Gly55 coordinates UMP. ATP contacts are provided by Gly56 and Arg60. UMP is bound by residues Asp75 and 136–143; that span reads TGNPFFTT. Residues Thr163, Asn164, Tyr169, and Asp172 each contribute to the ATP site.

Belongs to the UMP kinase family. In terms of assembly, homohexamer.

Its subcellular location is the cytoplasm. It carries out the reaction UMP + ATP = UDP + ADP. The protein operates within pyrimidine metabolism; CTP biosynthesis via de novo pathway; UDP from UMP (UMPK route): step 1/1. Inhibited by UTP. In terms of biological role, catalyzes the reversible phosphorylation of UMP to UDP. The chain is Uridylate kinase from Neisseria meningitidis serogroup A / serotype 4A (strain DSM 15465 / Z2491).